The following is a 590-amino-acid chain: UvrABC system protein C (590 aa).

The GIY-YIG domain maps to 14 to 91 (DQPGCYLMKD…IKKHDPKYNV (78 aa)). A UVR domain is found at 196–231 (NEVKKELEEKMHEAAENLEFERAKELRDQIAHIEST).

The protein belongs to the UvrC family. Interacts with UvrB in an incision complex.

Its subcellular location is the cytoplasm. In terms of biological role, the UvrABC repair system catalyzes the recognition and processing of DNA lesions. UvrC both incises the 5' and 3' sides of the lesion. The N-terminal half is responsible for the 3' incision and the C-terminal half is responsible for the 5' incision. The protein is UvrABC system protein C of Bacillus subtilis (strain 168).